The primary structure comprises 342 residues: Serine/threonine-protein kinase-transforming protein mos (342 aa).

The Protein kinase domain occupies 63-338; that stretch reads VCLMHRLGSG…LLQRDLKAFR (276 aa). Residues 69–77 and Lys-90 each bind ATP; that span reads LGSGGFGSV. Residue Asp-198 is the Proton acceptor of the active site.

The protein belongs to the protein kinase superfamily. Ser/Thr protein kinase family.

The enzyme catalyses L-seryl-[protein] + ATP = O-phospho-L-seryl-[protein] + ADP + H(+). The catalysed reaction is L-threonyl-[protein] + ATP = O-phospho-L-threonyl-[protein] + ADP + H(+). The polypeptide is Serine/threonine-protein kinase-transforming protein mos (V-MOS) (Myeloproliferative sarcoma virus (isolate ts159)).